A 533-amino-acid polypeptide reads, in one-letter code: D-3-phosphoglycerate dehydrogenase (533 aa).

Alanine 2 carries the N-acetylalanine modification. Serine 14 carries the post-translational modification Phosphoserine. At lysine 58 the chain carries N6-acetyllysine. NAD(+)-binding positions include threonine 78, 155 to 156, aspartate 175, threonine 207, 234 to 236, and aspartate 260; these read RI and CAR. Residue threonine 78 is modified to Phosphothreonine. Arginine 236 is an active-site residue. The active site involves glutamate 265. The Proton donor role is filled by histidine 283. 283–286 lines the NAD(+) pocket; it reads HLGA.

This sequence belongs to the D-isomer specific 2-hydroxyacid dehydrogenase family. In terms of assembly, homotetramer.

The catalysed reaction is (2R)-3-phosphoglycerate + NAD(+) = 3-phosphooxypyruvate + NADH + H(+). It catalyses the reaction (R)-2-hydroxyglutarate + NAD(+) = 2-oxoglutarate + NADH + H(+). The enzyme catalyses (S)-malate + NAD(+) = oxaloacetate + NADH + H(+). It functions in the pathway amino-acid biosynthesis; L-serine biosynthesis; L-serine from 3-phospho-D-glycerate: step 1/3. In terms of biological role, catalyzes the reversible oxidation of 3-phospho-D-glycerate to 3-phosphonooxypyruvate, the first step of the phosphorylated L-serine biosynthesis pathway. Also catalyzes the reversible oxidation of 2-hydroxyglutarate to 2-oxoglutarate and the reversible oxidation of (S)-malate to oxaloacetate. The sequence is that of D-3-phosphoglycerate dehydrogenase (PHGDH) from Sus scrofa (Pig).